Consider the following 291-residue polypeptide: MACLSPSQLKKFQEDGFLLLEGFFTADECVVMQQRIGEIVAEMDVPLHCRTEFSTQEDEQLQTQGNTDYFLSSGDKIRFFFEKGVFDEKGNFLVPPEKSINKIGHALHAHDPVFRSITHSPKVQALVRSLGLQIPVVVQSMYIFKQPHFGGEVSPHQDATFLYTEPLGRVLGLWIATEDAMLENGCLWFIPGSHTSGVSRRMIRAPSDSGPGTSFLGSEPAWDNNLFVPLPVRRGGLVLIHGEVVHKSEQNLSDHSRQAYTFHLMEAAGTVWSPGNWLQPTTELPFPPLYI.

The residue at position 55 (threonine 55) is a Phosphothreonine. 2-oxoglutarate contacts are provided by residues lysine 102, methionine 141, 156–158, and tryptophan 174; that span reads HQD. Fe cation contacts are provided by histidine 156 and aspartate 158. Histidine 246 contributes to the Fe cation binding site. Residues serine 248 and arginine 257 each coordinate 2-oxoglutarate.

The protein belongs to the PhyH family. PHYHD1 subfamily. Requires Fe cation as cofactor.

2-oxoglutarate(2OG)-dependent dioxygenase that catalyzes the conversion of 2-oxoglutarate to succinate and CO(2) in an iron-dependent manner. However, does not couple 2OG turnover to the hydroxylation of acyl-coenzyme A derivatives, implying that it is not directly involved in phytanoyl coenzyme-A metabolism. Does not show detectable activity towards fatty acid CoA thioesters. This Rattus norvegicus (Rat) protein is Phytanoyl-CoA dioxygenase domain-containing protein 1 (Phyhd1).